The following is a 28-amino-acid chain: Palustrin-1a (28 aa).

A disulfide bridge connects residues cysteine 22 and cysteine 28.

In terms of tissue distribution, expressed by the skin glands.

Its subcellular location is the secreted. Antimicrobial activity against Gram-negative bacterium E.coli. This chain is Palustrin-1a, found in Lithobates palustris (Pickerel frog).